The following is a 359-amino-acid chain: 3-dehydroquinate synthase (359 aa).

Residues 69-74 (DAETGK), 103-107 (GAATD), 127-128 (TT), Lys140, and Lys149 contribute to the NAD(+) site. Zn(2+) contacts are provided by Glu182, His244, and His260.

This sequence belongs to the sugar phosphate cyclases superfamily. Dehydroquinate synthase family. The cofactor is Co(2+). Requires Zn(2+) as cofactor. It depends on NAD(+) as a cofactor.

It localises to the cytoplasm. It catalyses the reaction 7-phospho-2-dehydro-3-deoxy-D-arabino-heptonate = 3-dehydroquinate + phosphate. It functions in the pathway metabolic intermediate biosynthesis; chorismate biosynthesis; chorismate from D-erythrose 4-phosphate and phosphoenolpyruvate: step 2/7. Its function is as follows. Catalyzes the conversion of 3-deoxy-D-arabino-heptulosonate 7-phosphate (DAHP) to dehydroquinate (DHQ). In Corynebacterium diphtheriae (strain ATCC 700971 / NCTC 13129 / Biotype gravis), this protein is 3-dehydroquinate synthase.